The following is a 445-amino-acid chain: Phosphoglucosamine mutase (445 aa).

Ser-101 serves as the catalytic Phosphoserine intermediate. 4 residues coordinate Mg(2+): Ser-101, Asp-240, Asp-242, and Asp-244. Ser-101 is modified (phosphoserine).

This sequence belongs to the phosphohexose mutase family. The cofactor is Mg(2+). Post-translationally, activated by phosphorylation.

The catalysed reaction is alpha-D-glucosamine 1-phosphate = D-glucosamine 6-phosphate. Functionally, catalyzes the conversion of glucosamine-6-phosphate to glucosamine-1-phosphate. The protein is Phosphoglucosamine mutase of Pseudomonas aeruginosa (strain LESB58).